Consider the following 206-residue polypeptide: Small ribosomal subunit protein uS4 (206 aa).

Residues 96-157 (SRLDNVVYRM…KAKNQARIQN (62 aa)) enclose the S4 RNA-binding domain.

It belongs to the universal ribosomal protein uS4 family. Part of the 30S ribosomal subunit. Contacts protein S5. The interaction surface between S4 and S5 is involved in control of translational fidelity.

One of the primary rRNA binding proteins, it binds directly to 16S rRNA where it nucleates assembly of the body of the 30S subunit. Its function is as follows. With S5 and S12 plays an important role in translational accuracy. This chain is Small ribosomal subunit protein uS4, found in Chromohalobacter salexigens (strain ATCC BAA-138 / DSM 3043 / CIP 106854 / NCIMB 13768 / 1H11).